The primary structure comprises 1186 residues: Myelin transcription factor 1-like protein (1186 aa).

Residues 1 to 21 (MEVDTEEKRHRTRSKGVRVPV) are disordered. Residues 22–65 (EPAIQELFSCPTPGCDGSGHVSGKYARHRSVYGCPLAKKRKTQD) form a CCHHC-type 1 zinc finger. Zn(2+) is bound by residues Cys31, Cys36, His49, and Cys55. Disordered regions lie at residues 56–175 (PLAK…QMNC) and 220–247 (RTES…GRKS). Acidic residues predominate over residues 86 to 169 (SVDECDDSDG…EEEEEEEENE (84 aa)). Ser250 is subject to Phosphoserine. Disordered regions lie at residues 342–372 (SETN…GRTP) and 449–513 (REKM…GCDG). The span at 343-357 (ETNPQERNPQQNMNI) shows a compositional bias: polar residues. Basic and acidic residues-rich tracts occupy residues 361–372 (VRPEEDFPGRTP), 449–487 (REKM…DSHV), and 495–505 (DPSRTEKKESK). 2 consecutive CCHHC-type zinc fingers follow at residues 497–540 (SRTE…PPEI) and 541–584 (LAMH…KLAK). Zn(2+) is bound by residues Cys506, Cys511, His524, Cys530, Cys550, Cys555, His568, and Cys574. Disordered stretches follow at residues 659–709 (RAIA…GGGS) and 753–780 (KPQD…MNKQ). The segment covering 666–683 (QTRDISPKGYDDAKRYCK) has biased composition (basic and acidic residues). The span at 685–709 (PSPSSSSTSSYAPSSSSNLSCGGGS) shows a compositional bias: low complexity. 3 CCHHC-type zinc fingers span residues 896 to 939 (LATS…GIRI), 945 to 988 (DKED…QKDG), and 998 to 1041 (KSVK…MKKA). Cys905, Cys910, His923, Cys929, Cys954, Cys959, His972, Cys978, Cys1007, Cys1012, His1025, and Cys1031 together coordinate Zn(2+). Residues 1056-1130 (SNGIENDEEI…LANLSQSLIH (75 aa)) adopt a coiled-coil conformation.

This sequence belongs to the MYT1 family. Interacts with SIN3B.

It localises to the nucleus. The protein localises to the chromosome. Transcription factor that plays a key role in neuronal differentiation by specifically repressing expression of non-neuronal genes during neuron differentiation. In contrast to other transcription repressors that inhibit specific lineages, mediates repression of multiple differentiation programs. Also represses expression of negative regulators of neurogenesis, such as members of the Notch signaling pathway, including HES1. The combination of three transcription factors, ASCL1, POU3F2/BRN2 and MYT1L, is sufficient to reprogram fibroblasts and other somatic cells into induced neuronal (iN) cells in vitro. Directly binds the 5'-AAGTT-3' core motif present on the promoter of target genes and represses transcription by recruiting a multiprotein complex containing SIN3B. The 5'-AAGTT-3' core motif is absent from the promoter of neural genes. This is Myelin transcription factor 1-like protein from Homo sapiens (Human).